The sequence spans 464 residues: NADH-quinone oxidoreductase subunit N (464 aa).

The next 13 helical transmembrane spans lie at 5-25 (MLLA…VLFL), 31-51 (LLSA…PASL), 63-83 (LFAR…CLLS), 96-116 (EYAA…ASTS), 117-137 (LVSL…LIAV), 152-172 (LLPG…VYAA), 188-208 (GAPM…AAAF), 242-262 (VFAV…RPLL), 286-303 (MLAY…LAVL), 312-332 (AGLF…GLLA), 358-378 (AVLL…AGFM), 393-415 (VGLV…RPVL), and 436-456 (LIFV…GPFF).

It belongs to the complex I subunit 2 family. NDH-1 is composed of 14 different subunits. Subunits NuoA, H, J, K, L, M, N constitute the membrane sector of the complex.

The protein localises to the cell inner membrane. The catalysed reaction is a quinone + NADH + 5 H(+)(in) = a quinol + NAD(+) + 4 H(+)(out). NDH-1 shuttles electrons from NADH, via FMN and iron-sulfur (Fe-S) centers, to quinones in the respiratory chain. The immediate electron acceptor for the enzyme in this species is believed to be ubiquinone. Couples the redox reaction to proton translocation (for every two electrons transferred, four hydrogen ions are translocated across the cytoplasmic membrane), and thus conserves the redox energy in a proton gradient. The polypeptide is NADH-quinone oxidoreductase subunit N (Syntrophotalea carbinolica (strain DSM 2380 / NBRC 103641 / GraBd1) (Pelobacter carbinolicus)).